The following is a 490-amino-acid chain: Probable malate:quinone oxidoreductase (490 aa).

The protein belongs to the MQO family. It depends on FAD as a cofactor.

It catalyses the reaction (S)-malate + a quinone = a quinol + oxaloacetate. Its pathway is carbohydrate metabolism; tricarboxylic acid cycle; oxaloacetate from (S)-malate (quinone route): step 1/1. The polypeptide is Probable malate:quinone oxidoreductase (Corynebacterium jeikeium (strain K411)).